The sequence spans 495 residues: MADRNLRDLLAPWVQNVPARALREMVLDSRVAASGDLFVAVVGHQADGRRYIPQAIAQGVAAIIAEAKDDATDGEIREMHGVPVIYLSQLNERLSALAGRFYHEPSDQLRLVGVTGTNGKTTTTQLMAQWAQLLGETGAVMGTVGNGLLGKVNPTENTTGSAVDVQHVLSGLAGQGATFAAMEVSSHGLVQHRVSALKFAASVFTNLSRDHLDYHGDMENYEAAKWLLYSTHHCGQAIINADDEVGRRWLAKLPDAVAVSMEDHINPNCHGRWLKATDVDYHDSGATIRFASSWGEGEIESRLMGAFNVSNLLLALATLLALDYPLSELVNTGARLQPVCGRMEVFTAPGKPTVVVDYAHTPDALEKALQAARLHCTGKLWCVFGCGGDRDKGKRPLMGAIAEQFADIPVVTDDNPRTEEPRAIINDILAGMMDAGHARVVEGRAEAVTNAIMQAKENDVVLLAGKGHEDYQIVGAHRLDYSDRVTAARLLGALA.

UDP-N-acetyl-alpha-D-muramoyl-L-alanyl-D-glutamate-binding positions include L27, S29, and 44–46; that span reads HQA. Residue 116 to 122 coordinates ATP; that stretch reads GTNGKTT. UDP-N-acetyl-alpha-D-muramoyl-L-alanyl-D-glutamate is bound by residues N157, 158-159, S185, Q191, and R193; that span reads TT. K225 is subject to N6-carboxylysine. Meso-2,6-diaminopimelate contacts are provided by residues R390, 414–417, G465, and E469; that span reads DNPR. Positions 414-417 match the Meso-diaminopimelate recognition motif motif; sequence DNPR.

This sequence belongs to the MurCDEF family. MurE subfamily. The cofactor is Mg(2+). In terms of processing, carboxylation is probably crucial for Mg(2+) binding and, consequently, for the gamma-phosphate positioning of ATP.

It localises to the cytoplasm. The enzyme catalyses UDP-N-acetyl-alpha-D-muramoyl-L-alanyl-D-glutamate + meso-2,6-diaminopimelate + ATP = UDP-N-acetyl-alpha-D-muramoyl-L-alanyl-gamma-D-glutamyl-meso-2,6-diaminopimelate + ADP + phosphate + H(+). Its pathway is cell wall biogenesis; peptidoglycan biosynthesis. Functionally, catalyzes the addition of meso-diaminopimelic acid to the nucleotide precursor UDP-N-acetylmuramoyl-L-alanyl-D-glutamate (UMAG) in the biosynthesis of bacterial cell-wall peptidoglycan. This is UDP-N-acetylmuramoyl-L-alanyl-D-glutamate--2,6-diaminopimelate ligase from Enterobacter sp. (strain 638).